A 274-amino-acid chain; its full sequence is NADPH-dependent 7-cyano-7-deazaguanine reductase (274 aa).

80 to 82 (VES) provides a ligand contact to substrate. 82–83 (SK) lines the NADPH pocket. Residue cysteine 181 is the Thioimide intermediate of the active site. Residue aspartate 188 is the Proton donor of the active site. 220–221 (HE) serves as a coordination point for substrate. 249 to 250 (RG) contacts NADPH.

Belongs to the GTP cyclohydrolase I family. QueF type 2 subfamily. Homodimer.

The protein localises to the cytoplasm. It catalyses the reaction 7-aminomethyl-7-carbaguanine + 2 NADP(+) = 7-cyano-7-deazaguanine + 2 NADPH + 3 H(+). It participates in tRNA modification; tRNA-queuosine biosynthesis. Its function is as follows. Catalyzes the NADPH-dependent reduction of 7-cyano-7-deazaguanine (preQ0) to 7-aminomethyl-7-deazaguanine (preQ1). In Paraburkholderia phymatum (strain DSM 17167 / CIP 108236 / LMG 21445 / STM815) (Burkholderia phymatum), this protein is NADPH-dependent 7-cyano-7-deazaguanine reductase.